The chain runs to 294 residues: Cyclin-dependent kinase A-1 (294 aa).

One can recognise a Protein kinase domain in the interval 4–287 (YEKVEKIGEG…ARAALEHEYF (284 aa)). ATP-binding positions include 10-18 (IGEGTYGVV) and Lys-33. Tyr-15 carries the post-translational modification Phosphotyrosine. Residue Asp-127 is the Proton acceptor of the active site. At Thr-161 the chain carries Phosphothreonine.

The protein belongs to the protein kinase superfamily. CMGC Ser/Thr protein kinase family. CDC2/CDKX subfamily. As to quaternary structure, interacts with CDT1A, CYCA2-3, CYCD2-1, CYCD3-1, CYCD4-1, CYCD4-2, CYCH1-1, CYCU1-1, CYCU2-1, CYCU2-2, CYCU3-1, CYCU4-1, CYCU4-2, CYCU4-3, CKS1, KRP2/ICK2, KRP3/ICK6, KRP4/ICK7, KRP6/ICK4, KRP7/ICK5, and C-terminal domain of KRP1/ICK1. Interacts with WEE1 and TIF4A-1/EIF4A-1. Interacts with PAS2; when phosphorylated at Tyr-15. Interacts with SMR3, SMR4, SMR5, SMR6, SMR8 and At4g14310. Binds to CYCD3-2. Component of a DREAM-like complex which modulates a variety of developmentally regulated genes and of the mitotic genes in proliferating and differentiated cells. Interacts with MYB3R3 at later and with MYB3R4 at earlier stages of leaf development. May interact with SPCH. Post-translationally, phosphorylated at Tyr-15 by WEE1. Phosphorylation at Thr-161 is important for the kinase activity and substrate binding. Binding to the anti-phosphatase PAS2 prevents dephosphorylation. Expressed in roots, stems, flowers and siliques.

The protein resides in the cytoplasm. Its subcellular location is the nucleus. It catalyses the reaction L-seryl-[protein] + ATP = O-phospho-L-seryl-[protein] + ADP + H(+). The catalysed reaction is L-threonyl-[protein] + ATP = O-phospho-L-threonyl-[protein] + ADP + H(+). It carries out the reaction [DNA-directed RNA polymerase] + ATP = phospho-[DNA-directed RNA polymerase] + ADP + H(+). Its activity is regulated as follows. CDK kinase activated by CDKF-1. CDK kinase activity inhibited by KRP1/ICK1, KRP2/ICK2, KRP3/ICK6, KRP4/ICK7, KRP5/ICK3, KRP6/ICK4 and KRP7/ICK5. Down-regulated by phosphorylation by WEE1. Its function is as follows. Involved in the control of the cell cycle. Essential for both G1/S and G2/M (mitosis) phase transitions. Functions in cell morphogenesis as well as cell proliferation. Required for cell division (entry into mitosis) of the generative cell in male gametogenesis. Required to trigger guard mother cells (GMC) symmetric divisions at the late stage of stomatal development, probably via the regulation of G1 to S transition in the cell cycle. Required for the function of SPCH in entering the stomatal lineage. Promotes divisions in the guard cells (GCs) after the guard mother cells (GMC) symmetric division when in the presence of CYCD3-2 via the phosphorylation of SPCH. This is Cyclin-dependent kinase A-1 from Arabidopsis thaliana (Mouse-ear cress).